Reading from the N-terminus, the 204-residue chain is Small ribosomal subunit protein uS4c (204 aa).

The S4 RNA-binding domain occupies 90 to 150 (MRLDNILYRL…GKKTDQLKTI (61 aa)).

It belongs to the universal ribosomal protein uS4 family. Part of the 30S ribosomal subunit. Contacts protein S5. The interaction surface between S4 and S5 is involved in control of translational fidelity.

Its subcellular location is the plastid. The protein resides in the chloroplast. In terms of biological role, one of the primary rRNA binding proteins, it binds directly to 16S rRNA where it nucleates assembly of the body of the 30S subunit. With S5 and S12 plays an important role in translational accuracy. The sequence is that of Small ribosomal subunit protein uS4c (rps4) from Gnetum parvifolium (Small-leaved jointfir).